Here is a 221-residue protein sequence, read N- to C-terminus: Adenylate kinase (221 aa).

10–15 provides a ligand contact to ATP; sequence GAGKGT. The segment at 30–59 is NMP; that stretch reads STGDMLRAAVKAGTPLGVEAKKVMDAGGLV. AMP-binding positions include Thr31, Arg36, 57–59, 85–88, and Gln92; these read GLV and GFPR. An LID region spans residues 122 to 159; the sequence is GRRVHVASGRTYHVKYNPPKTEGVDDETGEALIQRDDD. ATP is bound by residues Arg123 and 132–133; that span reads TY. The AMP site is built by Arg156 and Arg167. Gly207 serves as a coordination point for ATP.

Belongs to the adenylate kinase family. Monomer.

It localises to the cytoplasm. It catalyses the reaction AMP + ATP = 2 ADP. It participates in purine metabolism; AMP biosynthesis via salvage pathway; AMP from ADP: step 1/1. Its function is as follows. Catalyzes the reversible transfer of the terminal phosphate group between ATP and AMP. Plays an important role in cellular energy homeostasis and in adenine nucleotide metabolism. The protein is Adenylate kinase of Cupriavidus necator (strain ATCC 17699 / DSM 428 / KCTC 22496 / NCIMB 10442 / H16 / Stanier 337) (Ralstonia eutropha).